We begin with the raw amino-acid sequence, 79 residues long: Small ribosomal subunit protein uS17 (79 aa).

The protein belongs to the universal ribosomal protein uS17 family. As to quaternary structure, part of the 30S ribosomal subunit.

In terms of biological role, one of the primary rRNA binding proteins, it binds specifically to the 5'-end of 16S ribosomal RNA. The sequence is that of Small ribosomal subunit protein uS17 from Orientia tsutsugamushi (strain Ikeda) (Rickettsia tsutsugamushi).